A 444-amino-acid polypeptide reads, in one-letter code: Tryptophan 5-hydroxylase 1 (444 aa).

The ACT domain occupies 19–94; it reads TLIFSLKNEV…TVLSVDSPDQ (76 aa). Ser-58 carries the post-translational modification Phosphoserine; by PKA. 3 residues coordinate L-tryptophan: Tyr-235, Arg-257, and Thr-265. The Fe cation site is built by His-272, His-277, and Glu-317. Ser-336 and Ile-366 together coordinate L-tryptophan.

The protein belongs to the biopterin-dependent aromatic amino acid hydroxylase family. Homotetramer. Interacts with DNAJC12. Fe(2+) serves as cofactor. Ubiquitinated, leading to its degradation by the proteasome. Ubiquitinated is triggered by phosphorylation. Post-translationally, phosphorylated; triggering degradation by the proteasome.

The catalysed reaction is (6R)-L-erythro-5,6,7,8-tetrahydrobiopterin + L-tryptophan + O2 = 5-hydroxy-L-tryptophan + (4aS,6R)-4a-hydroxy-L-erythro-5,6,7,8-tetrahydrobiopterin. Its pathway is aromatic compound metabolism; serotonin biosynthesis; serotonin from L-tryptophan: step 1/2. Its function is as follows. Oxidizes L-tryptophan to 5-hydroxy-l-tryptophan in the rate-determining step of serotonin biosynthesis. This chain is Tryptophan 5-hydroxylase 1 (Tph1), found in Rattus norvegicus (Rat).